A 222-amino-acid polypeptide reads, in one-letter code: Hexitol phosphatase B (222 aa).

The active-site Nucleophile is D13. Residues D13 and D15 each contribute to the a divalent metal cation site. Substrate-binding positions include 13-15, 115-116, and K148; these read DMD and SA. D15 acts as the Proton donor in catalysis. D173 provides a ligand contact to a divalent metal cation.

It belongs to the HAD-like hydrolase superfamily. CbbY/CbbZ/Gph/YieH family. It depends on Mg(2+) as a cofactor. Mn(2+) serves as cofactor. The cofactor is Co(2+). Requires Zn(2+) as cofactor.

The catalysed reaction is sugar phosphate + H2O = sugar + phosphate.. It carries out the reaction 2-deoxy-D-glucose 6-phosphate + H2O = 2-deoxy-D-glucose + phosphate. The enzyme catalyses D-mannitol 1-phosphate + H2O = D-mannitol + phosphate. It catalyses the reaction D-sorbitol 6-phosphate + H2O = D-sorbitol + phosphate. In terms of biological role, sugar-phosphate phosphohydrolase that catalyzes the dephosphorylation of D-mannitol 1-phosphate and D-sorbitol 6-phosphate. Also catalyzes the dephosphorylation of 2-deoxyglucose 6-phosphate (2dGlu6P); this is a biologically important activity in vivo since it contributes to the elimination of this toxic compound and plays an important role in the resistance of E.coli to 2-deoxyglucose. To a lesser extent, is also able to dephosphorylate mannose 6-phosphate (Man6P), erythrose-4-phosphate, 2-deoxyribose-5-phosphate (2dRib5P), ribose-5-phosphate (Rib5P) and glucose-6-phosphate (Glu6P) in vitro. The polypeptide is Hexitol phosphatase B (Escherichia coli (strain K12)).